A 455-amino-acid polypeptide reads, in one-letter code: Bifunctional protein GlmU (455 aa).

Residues 1 to 227 (MGLSVIILAA…CEEVQGVNDR (227 aa)) form a pyrophosphorylase region. UDP-N-acetyl-alpha-D-glucosamine-binding positions include 8–11 (LAAG), K22, Q73, 78–79 (GT), 100–102 (YGD), G137, E152, N167, and N225. Mg(2+) is bound at residue D102. Residue N225 coordinates Mg(2+). Residues 228–248 (WELTKLERYYQRLMAKKLSLA) are linker. An N-acetyltransferase region spans residues 249–455 (GVTIIDPERF…KGWHRPTKKE (207 aa)). UDP-N-acetyl-alpha-D-glucosamine-binding residues include R332 and K350. H362 serves as the catalytic Proton acceptor. 2 residues coordinate UDP-N-acetyl-alpha-D-glucosamine: Y365 and N376. Residues A379, 385 to 386 (NY), S404, A422, and R439 each bind acetyl-CoA.

This sequence in the N-terminal section; belongs to the N-acetylglucosamine-1-phosphate uridyltransferase family. In the C-terminal section; belongs to the transferase hexapeptide repeat family. In terms of assembly, homotrimer. Requires Mg(2+) as cofactor.

It is found in the cytoplasm. It carries out the reaction alpha-D-glucosamine 1-phosphate + acetyl-CoA = N-acetyl-alpha-D-glucosamine 1-phosphate + CoA + H(+). It catalyses the reaction N-acetyl-alpha-D-glucosamine 1-phosphate + UTP + H(+) = UDP-N-acetyl-alpha-D-glucosamine + diphosphate. It participates in nucleotide-sugar biosynthesis; UDP-N-acetyl-alpha-D-glucosamine biosynthesis; N-acetyl-alpha-D-glucosamine 1-phosphate from alpha-D-glucosamine 6-phosphate (route II): step 2/2. The protein operates within nucleotide-sugar biosynthesis; UDP-N-acetyl-alpha-D-glucosamine biosynthesis; UDP-N-acetyl-alpha-D-glucosamine from N-acetyl-alpha-D-glucosamine 1-phosphate: step 1/1. Its pathway is bacterial outer membrane biogenesis; LPS lipid A biosynthesis. Functionally, catalyzes the last two sequential reactions in the de novo biosynthetic pathway for UDP-N-acetylglucosamine (UDP-GlcNAc). The C-terminal domain catalyzes the transfer of acetyl group from acetyl coenzyme A to glucosamine-1-phosphate (GlcN-1-P) to produce N-acetylglucosamine-1-phosphate (GlcNAc-1-P), which is converted into UDP-GlcNAc by the transfer of uridine 5-monophosphate (from uridine 5-triphosphate), a reaction catalyzed by the N-terminal domain. This is Bifunctional protein GlmU from Coxiella burnetii (strain CbuK_Q154) (Coxiella burnetii (strain Q154)).